Consider the following 357-residue polypeptide: Putative F-box protein At5g50220 (357 aa).

An F-box domain is found at 27 to 73; it reads IAEDIGIPIDLMVEILKKLPAKSLIKFQCVSKQWSSIIGSSRDFIDS.

The chain is Putative F-box protein At5g50220 from Arabidopsis thaliana (Mouse-ear cress).